The following is a 187-amino-acid chain: POM121 and ZP3 fusion protein (187 aa).

Residues 166–187 are disordered; the sequence is GTPSHSRRQPRVVSQWSTSASL. Residues 177-187 are compositionally biased toward polar residues; it reads VVSQWSTSASL.

In terms of tissue distribution, expressed in spleen, thymus, pancreas, testis, ovary, small intestine, colon and lymphocytes.

This is POM121 and ZP3 fusion protein (POMZP3) from Homo sapiens (Human).